Reading from the N-terminus, the 164-residue chain is Diphosphoinositol polyphosphate phosphohydrolase 3-alpha (164 aa).

Residues Arg-9, 17–19 (KKR), and 38–40 (SSR) each bind substrate. In terms of domain architecture, Nudix hydrolase spans 17–144 (KKRAACLCFR…VHAEYLEKLK (128 aa)). Positions 49 and 65 each coordinate Mg(2+). Positions 50 to 71 (GGMEPEEEPGGAAVREVYEEAG) match the Nudix box motif. Catalysis depends on Glu-68, which acts as the Proton acceptor. Glu-69 provides a ligand contact to Mg(2+). Residues 89 to 91 (PKH), Arg-115, and Lys-133 contribute to the substrate site. Residues 144–164 (KLGGSPTNGNSMAPSSPDSDP) are disordered. The span at 148-164 (SPTNGNSMAPSSPDSDP) shows a compositional bias: polar residues.

It belongs to the Nudix hydrolase family. DIPP subfamily. It depends on Mg(2+) as a cofactor. Mn(2+) is required as a cofactor. Mainly expressed in testis and, at lower level in brain. According to PubMed:12121577, it is widely expressed.

It is found in the cytoplasm. The catalysed reaction is diphospho-myo-inositol polyphosphate + H2O = myo-inositol polyphosphate + phosphate.. It carries out the reaction P(1),P(6)-bis(5'-adenosyl) hexaphosphate + H2O = adenosine 5'-pentaphosphate + AMP + 2 H(+). The enzyme catalyses P(1),P(5)-bis(5'-adenosyl) pentaphosphate + H2O = adenosine 5'-tetraphosphate + AMP + 2 H(+). In terms of biological role, cleaves a beta-phosphate from the diphosphate groups in PP-InsP5 (diphosphoinositol pentakisphosphate), suggesting that it may play a role in signal transduction. Also able to catalyze the hydrolysis of dinucleoside oligophosphates, with Ap6A and Ap5A being the preferred substrates. The major reaction products are ADP and p4a from Ap6A and ADP and ATP from Ap5A. Also able to hydrolyze 5-phosphoribose 1-diphosphate. The protein is Diphosphoinositol polyphosphate phosphohydrolase 3-alpha (NUDT10) of Homo sapiens (Human).